A 336-amino-acid polypeptide reads, in one-letter code: Probable G-protein coupled receptor 160 (336 aa).

At M1–Q20 the chain is on the extracellular side. N-linked (GlcNAc...) asparagine glycosylation is present at N8. The chain crosses the membrane as a helical span at residues L21–L41. Topologically, residues L42–E56 are cytoplasmic. A helical transmembrane segment spans residues Y57–T77. The Extracellular portion of the chain corresponds to Y78–C95. A helical membrane pass occupies residues L96–A116. The Cytoplasmic segment spans residues C117–K136. A helical transmembrane segment spans residues L137–D157. Topologically, residues P158–S186 are extracellular. Residues L187–L207 form a helical membrane-spanning segment. Over L208 to R243 the chain is Cytoplasmic. The helical transmembrane segment at L244–S264 threads the bilayer. Over L265–Y272 the chain is Extracellular. Residues I273–W293 form a helical membrane-spanning segment. Over F294 to C336 the chain is Cytoplasmic.

Belongs to the G-protein coupled receptor 1 family.

Its subcellular location is the cell membrane. In terms of biological role, orphan receptor. The chain is Probable G-protein coupled receptor 160 (Gpr160) from Mus musculus (Mouse).